The primary structure comprises 211 residues: Soluble inorganic pyrophosphatase PPA1 (211 aa).

2 residues coordinate substrate: Lys-61 and Arg-75. Tyr-83 functions as the Proton donor in the catalytic mechanism. Residue Tyr-87 participates in substrate binding. 3 residues coordinate Mg(2+): Asp-97, Asp-102, and Asp-134. Tyr-171 is a binding site for substrate.

The protein belongs to the PPase family. It depends on Mg(2+) as a cofactor.

Its subcellular location is the cytoplasm. The enzyme catalyses diphosphate + H2O = 2 phosphate + H(+). With respect to regulation, strongly inhibited by Ca(2+). Catalyzes the irreversible hydrolysis of pyrophosphate (PPi) to phosphate. In Solanum tuberosum (Potato), this protein is Soluble inorganic pyrophosphatase PPA1.